The chain runs to 215 residues: 24 kDa Ras-like protein (215 aa).

17-24 (GGGGVGKS) contributes to the GTP binding site. An Effector region motif is present at residues 39–47 (YDPTIEDSY). GTP contacts are provided by residues 64-68 (DTAGQ) and 123-126 (NKCD). The disordered stretch occupies residues 179–199 (QTGRPAIAAGGGGPAGSYTQD). Cys212 is subject to Cysteine methyl ester. The S-farnesyl cysteine moiety is linked to residue Cys212. Positions 213-215 (VIA) are cleaved as a propeptide — removed in mature form.

The protein belongs to the small GTPase superfamily. Ras family.

It localises to the cell membrane. The enzyme catalyses GTP + H2O = GDP + phosphate + H(+). Functionally, ras proteins bind GDP/GTP and possess intrinsic GTPase activity. This is 24 kDa Ras-like protein (CC-RAS) from Coprinopsis cinerea (strain Okayama-7 / 130 / ATCC MYA-4618 / FGSC 9003) (Inky cap fungus).